The chain runs to 193 residues: Holliday junction branch migration complex subunit RuvA (193 aa).

Residues 1 to 64 are domain I; it reads MITSLTGTIL…EDAHLLYGFM (64 aa). Residues 65 to 139 are domain II; it reads TVAERDMFRL…DKMGGIAPGP (75 aa). Positions 139–143 are flexible linker; the sequence is PMGRG. Positions 144–193 are domain III; the sequence is GAGDPRQEAIAALLTLGYKPAQASQAIAGLADGLGLEDLIRQSLQNLSRH.

The protein belongs to the RuvA family. Homotetramer. Forms an RuvA(8)-RuvB(12)-Holliday junction (HJ) complex. HJ DNA is sandwiched between 2 RuvA tetramers; dsDNA enters through RuvA and exits via RuvB. An RuvB hexamer assembles on each DNA strand where it exits the tetramer. Each RuvB hexamer is contacted by two RuvA subunits (via domain III) on 2 adjacent RuvB subunits; this complex drives branch migration. In the full resolvosome a probable DNA-RuvA(4)-RuvB(12)-RuvC(2) complex forms which resolves the HJ.

The protein resides in the cytoplasm. Functionally, the RuvA-RuvB-RuvC complex processes Holliday junction (HJ) DNA during genetic recombination and DNA repair, while the RuvA-RuvB complex plays an important role in the rescue of blocked DNA replication forks via replication fork reversal (RFR). RuvA specifically binds to HJ cruciform DNA, conferring on it an open structure. The RuvB hexamer acts as an ATP-dependent pump, pulling dsDNA into and through the RuvAB complex. HJ branch migration allows RuvC to scan DNA until it finds its consensus sequence, where it cleaves and resolves the cruciform DNA. The chain is Holliday junction branch migration complex subunit RuvA from Acidithiobacillus ferrooxidans (strain ATCC 53993 / BNL-5-31) (Leptospirillum ferrooxidans (ATCC 53993)).